We begin with the raw amino-acid sequence, 151 residues long: Nucleoside diphosphate kinase (151 aa).

ATP contacts are provided by K9, F57, R86, T92, R103, and N113. The active-site Pros-phosphohistidine intermediate is H116.

This sequence belongs to the NDK family. As to quaternary structure, homotetramer. Mg(2+) is required as a cofactor.

It localises to the cytoplasm. The enzyme catalyses a 2'-deoxyribonucleoside 5'-diphosphate + ATP = a 2'-deoxyribonucleoside 5'-triphosphate + ADP. The catalysed reaction is a ribonucleoside 5'-diphosphate + ATP = a ribonucleoside 5'-triphosphate + ADP. In terms of biological role, major role in the synthesis of nucleoside triphosphates other than ATP. The ATP gamma phosphate is transferred to the NDP beta phosphate via a ping-pong mechanism, using a phosphorylated active-site intermediate. In Chloroflexus aurantiacus (strain ATCC 29364 / DSM 637 / Y-400-fl), this protein is Nucleoside diphosphate kinase.